Consider the following 590-residue polypeptide: Peroxisomal targeting signal receptor (590 aa).

A Glycyl cysteine thioester (Cys-Gly) (interchain with G-Cter in ubiquitin) cross-link involves residue C6. The interval 7 to 29 (SVGSNPLAQLNKHAQGQGSSLSN) is amphipathic helix 1 (AH1). K18 is covalently cross-linked (Glycyl lysine isopeptide (Lys-Gly) (interchain with G-Cter in ubiquitin)). Over residues 18–30 (KHAQGQGSSLSNT) the composition is skewed to polar residues. The interval 18 to 45 (KHAQGQGSSLSNTHVRHSGGVSGSNVFR) is disordered. The amphipathic helix 2 (AH2) stretch occupies residues 56-74 (RQQLNSFMSQPMRLGEDKM). 3 short sequence motifs (wxxxF/Y motif) span residues 108-112 (WTREF), 139-143 (WKFRY), and 178-182 (WNDKF). Residues 227–243 (FQEVWDSIQQDTEEMLS) are amphipathic helix 4 (AH4). TPR repeat units lie at residues 285–319 (NPNAYQIGCILMENGAKLSEAALAFEAAIKQDPKH), 320–353 (VDAWLKLGIVQIQNEKELNGMSALETCLKLDPNN), 424–457 (PDIQLCLGLLFYANDEFDRTIDCFQAALKVNPND), 459–491 (LMWNRLGASLANSNRSEEAIQAYHRALQLKPSF), and 493–525 (RARYNLAVSSMNIGCYKEAAEHLLTALSMHDVE).

This sequence belongs to the peroxisomal targeting signal receptor family. Interacts (via WxxxF/Y and LVxEF motifs) with PEX14; promoting translocation through the PEX13-PEX14 docking complex. In terms of processing, monoubiquitinated at Cys-6 by PEX2 during PEX5 passage through the retrotranslocation channel: monoubiquitination acts as a signal for PEX5 extraction and is required for proper export from peroxisomes and recycling. When PEX5 recycling is compromised, polyubiquitinated at Lys-18 by PEX10 during its passage through the retrotranslocation channel, leading to its degradation.

The protein localises to the cytoplasm. It is found in the cytosol. The protein resides in the peroxisome matrix. Receptor that mediates peroxisomal import of proteins containing a C-terminal PTS1-type tripeptide peroxisomal targeting signal (SKL-type). Binds to cargo proteins containing a PTS1 peroxisomal targeting signal in the cytosol, and translocates them into the peroxisome matrix by passing through the PEX13-PEX14 docking complex along with cargo proteins. PEX5 receptor is then retrotranslocated into the cytosol, leading to release of bound cargo in the peroxisome matrix, and reset for a subsequent peroxisome import cycle. In Candida glabrata (strain ATCC 2001 / BCRC 20586 / JCM 3761 / NBRC 0622 / NRRL Y-65 / CBS 138) (Yeast), this protein is Peroxisomal targeting signal receptor (PEX5).